Consider the following 720-residue polypeptide: NADH-ubiquinone oxidoreductase 78 kDa subunit, mitochondrial (720 aa).

Residues M1–L23 constitute a mitochondrion transit peptide. A 2Fe-2S ferredoxin-type domain is found at A24–R102. Residues C58, C69, C72, and C86 each contribute to the [2Fe-2S] cluster site. Positions R102–G141 constitute a 4Fe-4S His(Cys)3-ligated-type domain. The region spanning L241 to R297 is the 4Fe-4S Mo/W bis-MGD-type domain.

Belongs to the complex I 75 kDa subunit family. As to quaternary structure, core subunit of respiratory chain NADH dehydrogenase (Complex I) which is composed of 45 different subunits. This is the largest subunit of complex I and it is a component of the iron-sulfur (IP) fragment of the enzyme. It depends on [2Fe-2S] cluster as a cofactor. The cofactor is [4Fe-4S] cluster.

The protein resides in the mitochondrion. It carries out the reaction a ubiquinone + NADH + 5 H(+)(in) = a ubiquinol + NAD(+) + 4 H(+)(out). In terms of biological role, core subunit of the mitochondrial membrane respiratory chain NADH dehydrogenase (Complex I) which catalyzes electron transfer from NADH through the respiratory chain, using ubiquinone as an electron acceptor. Essential for catalysing the entry and efficient transfer of electrons within complex I. Plays a key role in the assembly and stability of complex I and participates in the association of complex I with ubiquinol-cytochrome reductase complex (Complex III) to form supercomplexes. Plays a role in cell wall integrity and is involved in osmotic and oxidative resistance, yeast to hypha transition, and the ability to damage and invade oral epithelial cells. In Candida albicans (strain SC5314 / ATCC MYA-2876) (Yeast), this protein is NADH-ubiquinone oxidoreductase 78 kDa subunit, mitochondrial.